Reading from the N-terminus, the 406-residue chain is Eukaryotic initiation factor 4A-I (406 aa).

A disordered region spans residues 1 to 21 (MSASQDSRSRDNGPDGMEPEG). The residue at position 2 (Ser-2) is an N-acetylserine. Ser-4 bears the Phosphoserine mark. The Q motif motif lies at 32-60 (DSLDDMNLSESLLRGIYAYGFEKPSAIQQ). The region spanning 63 to 234 (ILSCIKGYDV…KKFMRDPIRI (172 aa)) is the Helicase ATP-binding domain. Residue 76–83 (AQSGTGKT) coordinates ATP. An N6-acetyllysine modification is found at Lys-118. A Glycyl lysine isopeptide (Lys-Gly) (interchain with G-Cter in SUMO2) cross-link involves residue Lys-146. A Phosphothreonine modification is found at Thr-158. Lys-174 is subject to N6-acetyllysine. Residues 182-185 (DEAD) carry the DEAD box motif. Lys-193 is modified (N6-acetyllysine). A Glycyl lysine isopeptide (Lys-Gly) (interchain with G-Cter in SUMO2) cross-link involves residue Lys-225. The residue at position 238 (Lys-238) is an N6-acetyllysine; alternate. A Glycyl lysine isopeptide (Lys-Gly) (interchain with G-Cter in SUMO2); alternate cross-link involves residue Lys-238. One can recognise a Helicase C-terminal domain in the interval 245-406 (GIRQFYINVE…EMPLNVADLI (162 aa)). Glycyl lysine isopeptide (Lys-Gly) (interchain with G-Cter in SUMO2) cross-links involve residues Lys-309, Lys-369, and Lys-381.

It belongs to the DEAD box helicase family. eIF4A subfamily. As to quaternary structure, eIF4F is a multi-subunit complex, the composition of which varies with external and internal environmental conditions. It is composed of at least EIF4A, EIF4E and EIF4G1/EIF4G3. Interacts with PAIP1, EIF4E and UPF2. Found in a complex with XPO7, EIF4A1, ARHGAP1, VPS26A, VPS29, VPS35 and SFN. May interact with NOM1. Interacts with PDCD4; this interferes with the interaction between EIF4A and EIF4G. Interacts with RBM4. Interacts with DDX3X in an RNA-independent manner. Interacts with PKP1 (via N-terminus); the interaction promotes EIF4A1 recruitment to the cap-dependent translation complex and EIF4A1 ATPase activity.

Its subcellular location is the cytoplasm. The protein resides in the perinuclear region. The protein localises to the cell membrane. It localises to the stress granule. The catalysed reaction is ATP + H2O = ADP + phosphate + H(+). ATP-dependent RNA helicase which is a subunit of the eIF4F complex involved in cap recognition and is required for mRNA binding to ribosome. In the current model of translation initiation, eIF4A unwinds RNA secondary structures in the 5'-UTR of mRNAs which is necessary to allow efficient binding of the small ribosomal subunit, and subsequent scanning for the initiator codon. As a result, promotes cell proliferation and growth. This chain is Eukaryotic initiation factor 4A-I (EIF4A1), found in Pongo abelii (Sumatran orangutan).